The following is a 502-amino-acid chain: ATP synthase subunit alpha (502 aa).

The disordered stretch occupies residues 119–139 (GPIATTKSRPIESPAPGVMDR). 169-176 (GDRQTGKT) provides a ligand contact to ATP.

It belongs to the ATPase alpha/beta chains family. In terms of assembly, F-type ATPases have 2 components, CF(1) - the catalytic core - and CF(0) - the membrane proton channel. CF(1) has five subunits: alpha(3), beta(3), gamma(1), delta(1), epsilon(1). CF(0) has three main subunits: a(1), b(2) and c(9-12). The alpha and beta chains form an alternating ring which encloses part of the gamma chain. CF(1) is attached to CF(0) by a central stalk formed by the gamma and epsilon chains, while a peripheral stalk is formed by the delta and b chains.

Its subcellular location is the cell membrane. It carries out the reaction ATP + H2O + 4 H(+)(in) = ADP + phosphate + 5 H(+)(out). Its function is as follows. Produces ATP from ADP in the presence of a proton gradient across the membrane. The alpha chain is a regulatory subunit. The chain is ATP synthase subunit alpha from Alkalihalophilus pseudofirmus (strain ATCC BAA-2126 / JCM 17055 / OF4) (Bacillus pseudofirmus).